Reading from the N-terminus, the 159-residue chain is Large ribosomal subunit protein uL11 (159 aa).

Positions 1 to 26 are disordered; it reads MAGTIEVLVPGGKANPGPPLGPELGP.

Belongs to the universal ribosomal protein uL11 family. As to quaternary structure, part of the ribosomal stalk of the 50S ribosomal subunit. Interacts with L10 and the large rRNA to form the base of the stalk. L10 forms an elongated spine to which L12 dimers bind in a sequential fashion forming a multimeric L10(L12)X complex.

Its function is as follows. Forms part of the ribosomal stalk which helps the ribosome interact with GTP-bound translation factors. This Haloferax volcanii (strain ATCC 29605 / DSM 3757 / JCM 8879 / NBRC 14742 / NCIMB 2012 / VKM B-1768 / DS2) (Halobacterium volcanii) protein is Large ribosomal subunit protein uL11.